A 450-amino-acid polypeptide reads, in one-letter code: Phosphoglucosamine mutase (450 aa).

Catalysis depends on S107, which acts as the Phosphoserine intermediate. Positions 107, 246, 248, and 250 each coordinate Mg(2+). At S107 the chain carries Phosphoserine.

The protein belongs to the phosphohexose mutase family. Mg(2+) serves as cofactor. Activated by phosphorylation.

It carries out the reaction alpha-D-glucosamine 1-phosphate = D-glucosamine 6-phosphate. Its function is as follows. Catalyzes the conversion of glucosamine-6-phosphate to glucosamine-1-phosphate. This chain is Phosphoglucosamine mutase, found in Aromatoleum aromaticum (strain DSM 19018 / LMG 30748 / EbN1) (Azoarcus sp. (strain EbN1)).